A 491-amino-acid chain; its full sequence is tRNA-2-methylthio-N(6)-dimethylallyladenosine synthase (491 aa).

Residues 54–172 (KTYHIKTFGC…ILNLLEQVIF (119 aa)) enclose the MTTase N-terminal domain. Residues cysteine 63, cysteine 99, cysteine 133, cysteine 209, cysteine 213, and cysteine 216 each coordinate [4Fe-4S] cluster. A Radical SAM core domain is found at 195–426 (RTNNLKGFVN…NEMVKTFSKK (232 aa)). The 63-residue stretch at 429–491 (EKYVNKVLDV…RFTLNGKMID (63 aa)) folds into the TRAM domain.

This sequence belongs to the methylthiotransferase family. MiaB subfamily. As to quaternary structure, monomer. [4Fe-4S] cluster serves as cofactor.

It is found in the cytoplasm. The catalysed reaction is N(6)-dimethylallyladenosine(37) in tRNA + (sulfur carrier)-SH + AH2 + 2 S-adenosyl-L-methionine = 2-methylsulfanyl-N(6)-dimethylallyladenosine(37) in tRNA + (sulfur carrier)-H + 5'-deoxyadenosine + L-methionine + A + S-adenosyl-L-homocysteine + 2 H(+). Catalyzes the methylthiolation of N6-(dimethylallyl)adenosine (i(6)A), leading to the formation of 2-methylthio-N6-(dimethylallyl)adenosine (ms(2)i(6)A) at position 37 in tRNAs that read codons beginning with uridine. The polypeptide is tRNA-2-methylthio-N(6)-dimethylallyladenosine synthase (Malacoplasma penetrans (strain HF-2) (Mycoplasma penetrans)).